We begin with the raw amino-acid sequence, 542 residues long: Chaperonin GroEL (542 aa).

ATP is bound by residues 29–32 (TLGP), Lys-50, 86–90 (DGTTT), Gly-413, 477–479 (NAA), and Asp-493.

It belongs to the chaperonin (HSP60) family. In terms of assembly, forms a cylinder of 14 subunits composed of two heptameric rings stacked back-to-back. Interacts with the co-chaperonin GroES.

Its subcellular location is the cytoplasm. It catalyses the reaction ATP + H2O + a folded polypeptide = ADP + phosphate + an unfolded polypeptide.. Its function is as follows. Together with its co-chaperonin GroES, plays an essential role in assisting protein folding. The GroEL-GroES system forms a nano-cage that allows encapsulation of the non-native substrate proteins and provides a physical environment optimized to promote and accelerate protein folding. This is Chaperonin GroEL from Solibacter usitatus (strain Ellin6076).